The chain runs to 695 residues: Glycine--tRNA ligase beta subunit (695 aa).

It belongs to the class-II aminoacyl-tRNA synthetase family. Tetramer of two alpha and two beta subunits.

The protein localises to the cytoplasm. The catalysed reaction is tRNA(Gly) + glycine + ATP = glycyl-tRNA(Gly) + AMP + diphosphate. This chain is Glycine--tRNA ligase beta subunit, found in Lawsonia intracellularis (strain PHE/MN1-00).